A 330-amino-acid polypeptide reads, in one-letter code: Ketol-acid reductoisomerase (NADP(+)) (330 aa).

Positions 1 to 182 (MAVVYYDQDA…GATRAGVIET (182 aa)) constitute a KARI N-terminal Rossmann domain. NADP(+) contacts are provided by residues 25–28 (YGSQ), R48, S51, S53, and 83–86 (DETQ). H108 is a catalytic residue. G134 is an NADP(+) binding site. The KARI C-terminal knotted domain maps to 183–328 (TFKEETETDL…DQLREMMSWL (146 aa)). D191, E195, E227, and E231 together coordinate Mg(2+). S252 contributes to the substrate binding site.

Belongs to the ketol-acid reductoisomerase family. Requires Mg(2+) as cofactor.

It carries out the reaction (2R)-2,3-dihydroxy-3-methylbutanoate + NADP(+) = (2S)-2-acetolactate + NADPH + H(+). The catalysed reaction is (2R,3R)-2,3-dihydroxy-3-methylpentanoate + NADP(+) = (S)-2-ethyl-2-hydroxy-3-oxobutanoate + NADPH + H(+). It functions in the pathway amino-acid biosynthesis; L-isoleucine biosynthesis; L-isoleucine from 2-oxobutanoate: step 2/4. The protein operates within amino-acid biosynthesis; L-valine biosynthesis; L-valine from pyruvate: step 2/4. Functionally, involved in the biosynthesis of branched-chain amino acids (BCAA). Catalyzes an alkyl-migration followed by a ketol-acid reduction of (S)-2-acetolactate (S2AL) to yield (R)-2,3-dihydroxy-isovalerate. In the isomerase reaction, S2AL is rearranged via a Mg-dependent methyl migration to produce 3-hydroxy-3-methyl-2-ketobutyrate (HMKB). In the reductase reaction, this 2-ketoacid undergoes a metal-dependent reduction by NADPH to yield (R)-2,3-dihydroxy-isovalerate. This is Ketol-acid reductoisomerase (NADP(+)) from Moorella thermoacetica (strain ATCC 39073 / JCM 9320).